A 205-amino-acid chain; its full sequence is MLGTKRHWPPGPSLSLELPLALTLLALRAGWAQEGTEPVLLEGECLVVCEPGRAAAGGPGGAALGEAPPGRVAFAAVRSHHHEPAGEIGNGTSGAIYFDQVLVNEGGGFDRTSGSFVAPVRGVYSFRFHVVKVYNRQTVQVSLMLNTWPVVSAFANDPDVTREAATSSVLLPLDPGDRVSLRLRRGNLLGGWKYSSFSGFLIFPL.

Positions 1–32 (MLGTKRHWPPGPSLSLELPLALTLLALRAGWA) are cleaved as a signal peptide. The C1q domain occupies 67–205 (APPGRVAFAA…SFSGFLIFPL (139 aa)). N-linked (GlcNAc...) asparagine glycosylation occurs at asparagine 90.

As to quaternary structure, heterohexamer; disulfide-linked heterotrimers. Interacts with CBLN1. May also form oligomers with CBLN2 and CBLN4.

It localises to the endoplasmic reticulum. The protein resides in the golgi apparatus. It is found in the cis-Golgi network. Its subcellular location is the secreted. The protein localises to the synapse. In terms of biological role, may be involved in synaptic functions in the CNS. This is Cerebellin-3 (CBLN3) from Bos taurus (Bovine).